The sequence spans 211 residues: Inactive ribonuclease-like protein 10 (211 aa).

Residues 1–24 (MKLTLVQIFFMMLLLLLGLGVGLG) form the signal peptide.

Belongs to the pancreatic ribonuclease family. The N-terminus is blocked. Glycosylated.

Its subcellular location is the secreted. Secreted proximal epididymal protein required for post-testicular sperm maturation and male fertility. May be involved in sperm adhesion to the egg zona pellucida. Does not have ribonuclease activity. The polypeptide is Inactive ribonuclease-like protein 10 (RNASE10) (Bos taurus (Bovine)).